Here is a 465-residue protein sequence, read N- to C-terminus: UDP-N-acetylmuramate--L-alanine ligase (465 aa).

112 to 118 is a binding site for ATP; it reads GTHGKTT.

The protein belongs to the MurCDEF family.

The protein resides in the cytoplasm. It carries out the reaction UDP-N-acetyl-alpha-D-muramate + L-alanine + ATP = UDP-N-acetyl-alpha-D-muramoyl-L-alanine + ADP + phosphate + H(+). The protein operates within cell wall biogenesis; peptidoglycan biosynthesis. Cell wall formation. In Burkholderia cenocepacia (strain ATCC BAA-245 / DSM 16553 / LMG 16656 / NCTC 13227 / J2315 / CF5610) (Burkholderia cepacia (strain J2315)), this protein is UDP-N-acetylmuramate--L-alanine ligase.